The following is a 386-amino-acid chain: S-adenosylmethionine synthase (386 aa).

His17 lines the ATP pocket. Asp19 provides a ligand contact to Mg(2+). Glu45 serves as a coordination point for K(+). L-methionine contacts are provided by Glu58 and Gln101. Residues 101 to 111 form a flexible loop region; sequence QSPDISQGVTE. Residues 168-170, Asp242, 248-249, Ala265, and Lys269 each bind ATP; these read DAK and RK. Residue Asp242 coordinates L-methionine. An L-methionine-binding site is contributed by Lys273.

This sequence belongs to the AdoMet synthase family. Homotetramer; dimer of dimers. Requires Mg(2+) as cofactor. K(+) serves as cofactor.

The protein resides in the cytoplasm. The catalysed reaction is L-methionine + ATP + H2O = S-adenosyl-L-methionine + phosphate + diphosphate. The protein operates within amino-acid biosynthesis; S-adenosyl-L-methionine biosynthesis; S-adenosyl-L-methionine from L-methionine: step 1/1. In terms of biological role, catalyzes the formation of S-adenosylmethionine (AdoMet) from methionine and ATP. The overall synthetic reaction is composed of two sequential steps, AdoMet formation and the subsequent tripolyphosphate hydrolysis which occurs prior to release of AdoMet from the enzyme. This is S-adenosylmethionine synthase from Leptospira interrogans serogroup Icterohaemorrhagiae serovar copenhageni (strain Fiocruz L1-130).